Consider the following 197-residue polypeptide: Crossover junction endodeoxyribonuclease RuvC (197 aa).

Residues Asp-7, Glu-68, and Asp-141 contribute to the active site. Residues Asp-7, Glu-68, and Asp-141 each coordinate Mg(2+). Low complexity-rich tracts occupy residues 165 to 181 (AAPA…TPAR) and 188 to 197 (APARRPAGAS). A disordered region spans residues 165 to 197 (AAPAAPVSRPAPATPARRSPRPAAPARRPAGAS).

This sequence belongs to the RuvC family. As to quaternary structure, homodimer which binds Holliday junction (HJ) DNA. The HJ becomes 2-fold symmetrical on binding to RuvC with unstacked arms; it has a different conformation from HJ DNA in complex with RuvA. In the full resolvosome a probable DNA-RuvA(4)-RuvB(12)-RuvC(2) complex forms which resolves the HJ. Mg(2+) serves as cofactor.

It localises to the cytoplasm. The catalysed reaction is Endonucleolytic cleavage at a junction such as a reciprocal single-stranded crossover between two homologous DNA duplexes (Holliday junction).. The RuvA-RuvB-RuvC complex processes Holliday junction (HJ) DNA during genetic recombination and DNA repair. Endonuclease that resolves HJ intermediates. Cleaves cruciform DNA by making single-stranded nicks across the HJ at symmetrical positions within the homologous arms, yielding a 5'-phosphate and a 3'-hydroxyl group; requires a central core of homology in the junction. The consensus cleavage sequence is 5'-(A/T)TT(C/G)-3'. Cleavage occurs on the 3'-side of the TT dinucleotide at the point of strand exchange. HJ branch migration catalyzed by RuvA-RuvB allows RuvC to scan DNA until it finds its consensus sequence, where it cleaves and resolves the cruciform DNA. This is Crossover junction endodeoxyribonuclease RuvC from Frankia alni (strain DSM 45986 / CECT 9034 / ACN14a).